A 275-amino-acid polypeptide reads, in one-letter code: Rhamnulose-1-phosphate aldolase (275 aa).

E117 is a catalytic residue. Residues H141, H143, and H212 each contribute to the Zn(2+) site.

This sequence belongs to the aldolase class II family. RhaD subfamily. In terms of assembly, homotetramer. Zn(2+) is required as a cofactor.

It is found in the cytoplasm. It catalyses the reaction L-rhamnulose 1-phosphate = (S)-lactaldehyde + dihydroxyacetone phosphate. The protein operates within carbohydrate degradation; L-rhamnose degradation; glycerone phosphate from L-rhamnose: step 3/3. Functionally, catalyzes the reversible cleavage of L-rhamnulose-1-phosphate to dihydroxyacetone phosphate (DHAP) and L-lactaldehyde. The protein is Rhamnulose-1-phosphate aldolase of Salmonella choleraesuis (strain SC-B67).